Here is a 425-residue protein sequence, read N- to C-terminus: Serine--tRNA ligase 2 (425 aa).

234 to 236 (TAE) serves as a coordination point for L-serine. 265–267 (RVE) contacts ATP. Glutamate 288 contributes to the L-serine binding site. 352-355 (EVSS) lines the ATP pocket. Serine 388 contacts L-serine.

This sequence belongs to the class-II aminoacyl-tRNA synthetase family. Type-1 seryl-tRNA synthetase subfamily. In terms of assembly, homodimer. The tRNA molecule binds across the dimer.

The protein localises to the cytoplasm. It catalyses the reaction tRNA(Ser) + L-serine + ATP = L-seryl-tRNA(Ser) + AMP + diphosphate + H(+). The catalysed reaction is tRNA(Sec) + L-serine + ATP = L-seryl-tRNA(Sec) + AMP + diphosphate + H(+). Its pathway is aminoacyl-tRNA biosynthesis; selenocysteinyl-tRNA(Sec) biosynthesis; L-seryl-tRNA(Sec) from L-serine and tRNA(Sec): step 1/1. Catalyzes the attachment of serine to tRNA(Ser). Is also able to aminoacylate tRNA(Sec) with serine, to form the misacylated tRNA L-seryl-tRNA(Sec), which will be further converted into selenocysteinyl-tRNA(Sec). The polypeptide is Serine--tRNA ligase 2 (Clostridium acetobutylicum (strain ATCC 824 / DSM 792 / JCM 1419 / IAM 19013 / LMG 5710 / NBRC 13948 / NRRL B-527 / VKM B-1787 / 2291 / W)).